Here is a 197-residue protein sequence, read N- to C-terminus: dTTP/UTP pyrophosphatase (197 aa).

Asp70 serves as the catalytic Proton acceptor.

This sequence belongs to the Maf family. YhdE subfamily. It depends on a divalent metal cation as a cofactor.

Its subcellular location is the cytoplasm. The enzyme catalyses dTTP + H2O = dTMP + diphosphate + H(+). It catalyses the reaction UTP + H2O = UMP + diphosphate + H(+). Nucleoside triphosphate pyrophosphatase that hydrolyzes dTTP and UTP. May have a dual role in cell division arrest and in preventing the incorporation of modified nucleotides into cellular nucleic acids. This chain is dTTP/UTP pyrophosphatase, found in Methanosarcina barkeri (strain Fusaro / DSM 804).